The primary structure comprises 99 residues: Protein S100-Z (99 aa).

2 consecutive EF-hand domains span residues 13 to 48 (IRIF…FLSC) and 50 to 85 (KETQ…LTVA). 9 residues coordinate Ca(2+): Ser20, Glu23, Lys28, Glu33, Asp63, Asn65, Asp67, Glu69, and Glu74.

The protein belongs to the S-100 family. In terms of assembly, homodimer. Interacts with S100P. In terms of tissue distribution, highest level of expression in spleen and leukocytes.

The polypeptide is Protein S100-Z (Homo sapiens (Human)).